The following is a 246-amino-acid chain: Small ribosomal subunit protein uS2 (246 aa).

Belongs to the universal ribosomal protein uS2 family.

In Burkholderia vietnamiensis (strain G4 / LMG 22486) (Burkholderia cepacia (strain R1808)), this protein is Small ribosomal subunit protein uS2.